The chain runs to 355 residues: Holliday junction branch migration complex subunit RuvB (355 aa).

A large ATPase domain (RuvB-L) region spans residues 1–193 (MGRFSEDSAD…FGFTAHMDFY (193 aa)). ATP is bound by residues Leu-32, Arg-33, Gly-74, Lys-77, Thr-78, Ser-79, 140-142 (EDF), Arg-183, Tyr-193, and Arg-230. A Mg(2+)-binding site is contributed by Thr-78. A small ATPAse domain (RuvB-S) region spans residues 194 to 264 (EPSELERVLA…IAKYALEVYD (71 aa)). The head domain (RuvB-H) stretch occupies residues 267-355 (ELGLDRLDRA…VGLGQTGLFD (89 aa)). The DNA site is built by Arg-322 and Arg-327.

The protein belongs to the RuvB family. As to quaternary structure, homohexamer. Forms an RuvA(8)-RuvB(12)-Holliday junction (HJ) complex. HJ DNA is sandwiched between 2 RuvA tetramers; dsDNA enters through RuvA and exits via RuvB. An RuvB hexamer assembles on each DNA strand where it exits the tetramer. Each RuvB hexamer is contacted by two RuvA subunits (via domain III) on 2 adjacent RuvB subunits; this complex drives branch migration. In the full resolvosome a probable DNA-RuvA(4)-RuvB(12)-RuvC(2) complex forms which resolves the HJ.

The protein localises to the cytoplasm. It carries out the reaction ATP + H2O = ADP + phosphate + H(+). Functionally, the RuvA-RuvB-RuvC complex processes Holliday junction (HJ) DNA during genetic recombination and DNA repair, while the RuvA-RuvB complex plays an important role in the rescue of blocked DNA replication forks via replication fork reversal (RFR). RuvA specifically binds to HJ cruciform DNA, conferring on it an open structure. The RuvB hexamer acts as an ATP-dependent pump, pulling dsDNA into and through the RuvAB complex. RuvB forms 2 homohexamers on either side of HJ DNA bound by 1 or 2 RuvA tetramers; 4 subunits per hexamer contact DNA at a time. Coordinated motions by a converter formed by DNA-disengaged RuvB subunits stimulates ATP hydrolysis and nucleotide exchange. Immobilization of the converter enables RuvB to convert the ATP-contained energy into a lever motion, pulling 2 nucleotides of DNA out of the RuvA tetramer per ATP hydrolyzed, thus driving DNA branch migration. The RuvB motors rotate together with the DNA substrate, which together with the progressing nucleotide cycle form the mechanistic basis for DNA recombination by continuous HJ branch migration. Branch migration allows RuvC to scan DNA until it finds its consensus sequence, where it cleaves and resolves cruciform DNA. The protein is Holliday junction branch migration complex subunit RuvB of Mycolicibacterium vanbaalenii (strain DSM 7251 / JCM 13017 / BCRC 16820 / KCTC 9966 / NRRL B-24157 / PYR-1) (Mycobacterium vanbaalenii).